A 491-amino-acid chain; its full sequence is Probable V-type proton ATPase subunit B 1 (491 aa).

ATP is bound at residue Arg380.

Belongs to the ATPase alpha/beta chains family. V-ATPase is a heteromultimeric enzyme made up of two complexes: the ATP-hydrolytic V1 complex and the proton translocation V0 complex. The V1 complex consists of three catalytic AB heterodimers that form a heterohexamer, three peripheral stalks each consisting of EG heterodimers, one central rotor including subunits D and F, and the regulatory subunits C and H. The proton translocation complex V0 consists of the proton transport subunit a, a ring of proteolipid subunits c9c'', rotary subunit d, subunits e and f, and the accessory subunits vah-19/Ac45 and vah-20/PRR.

In terms of biological role, non-catalytic subunit of the V1 complex of vacuolar(H+)-ATPase (V-ATPase), a multisubunit enzyme composed of a peripheral complex (V1) that hydrolyzes ATP and a membrane integral complex (V0) that translocates protons. V-ATPase is responsible for acidifying and maintaining the pH of intracellular compartments and in some cell types, is targeted to the plasma membrane, where it is responsible for acidifying the extracellular environment. Essential for the proper assembly and activity of V-ATPase. Required maternally for early embryogenesis and zygotically during morphogenesis. Specifically, involved in the clearance of apoptotic cell corpses in embryos. Also, during embryonic development, the V-ATPase is required to repress fusion of epidermal cells probably by negatively regulating eff-1-mediated cell fusion. In neurons, required for necrotic cell death by promoting intracellular acidification. Required for cell death induced by hypoxia. Required for acidification of synaptic vesicles and the release of neurotransmitters from adult neurons. In Caenorhabditis briggsae, this protein is Probable V-type proton ATPase subunit B 1.